Reading from the N-terminus, the 468-residue chain is Procollagen C-endopeptidase enhancer 1 (468 aa).

Residues 1–24 (MLPAALTSLLGPFLLAWVLPLARG) form the signal peptide. The N-linked (GlcNAc...) asparagine glycan is linked to Asn28. Cystine bridges form between Cys36-Cys62, Cys89-Cys111, Cys158-Cys185, and Cys212-Cys235. 2 CUB domains span residues 36-148 (CGGD…YSGR) and 158-272 (CGGR…YRTL). Thr41 carries the phosphothreonine modification. A Phosphoserine modification is found at Ser49. The interval 271–341 (TLPRDAVEKE…VAPDAPSITC (71 aa)) is disordered. Positions 272 to 281 (LPRDAVEKES) are enriched in basic and acidic residues. Disulfide bonds link Cys341–Cys409 and Cys356–Cys460. The 120-residue stretch at 341 to 460 (CPKQYKRSGT…ILSNLSKRKC (120 aa)) folds into the NTR domain. A glycan (N-linked (GlcNAc...) asparagine) is linked at Asn454.

As to quaternary structure, interacts with EFEMP2. Expressed at highest levels in collagen-rich tissues, especially tendon. Also expressed in cornea and sterna.

It is found in the secreted. Binds to the C-terminal propeptide of type I procollagen and enhances procollagen C-proteinase activity. The chain is Procollagen C-endopeptidase enhancer 1 (Pcolce) from Rattus norvegicus (Rat).